An 84-amino-acid chain; its full sequence is Small ribosomal subunit protein uS17 (84 aa).

The protein belongs to the universal ribosomal protein uS17 family. In terms of assembly, part of the 30S ribosomal subunit.

Functionally, one of the primary rRNA binding proteins, it binds specifically to the 5'-end of 16S ribosomal RNA. The polypeptide is Small ribosomal subunit protein uS17 (Salmonella typhi).